The following is a 158-amino-acid chain: MAALVRISSLCHRGVSPLLFRPSSLIRPLAVQQKDHDCSYLISARIHATPSNYAGSGSKAATMHWTGERILSIALLSLAPVAYFCPSPAVDYSLAAALTLHGHWGLGQVVTDYVHGDAKIKMANAGLFVLSTVTFAGLCYFNYHDVGICKAVALLWSK.

A mitochondrion-targeting transit peptide spans 1 to 29; that stretch reads MAALVRISSLCHRGVSPLLFRPSSLIRPL. Over 30–62 the chain is Mitochondrial matrix; the sequence is AVQQKDHDCSYLISARIHATPSNYAGSGSKAAT. Residues 63-84 traverse the membrane as a helical segment; that stretch reads MHWTGERILSIALLSLAPVAYF. At 85-89 the chain is on the mitochondrial intermembrane side; the sequence is CPSPA. Residues 90 to 110 traverse the membrane as a helical segment; the sequence is VDYSLAAALTLHGHWGLGQVV. A heme b-binding site is contributed by His-101. The Mitochondrial matrix portion of the chain corresponds to 111–119; it reads TDYVHGDAK. Residue Tyr-113 coordinates a ubiquinone. The helical transmembrane segment at 120–141 threads the bilayer; the sequence is IKMANAGLFVLSTVTFAGLCYF. The Mitochondrial intermembrane segment spans residues 142-158; sequence NYHDVGICKAVALLWSK.

The protein belongs to the CybS family. In terms of assembly, component of complex II composed of four subunits: the flavoprotein (FP) SDHA, iron-sulfur protein (IP) SDHB, and a cytochrome b560 composed of SDHC and SDHD.

The protein localises to the mitochondrion inner membrane. The protein operates within carbohydrate metabolism; tricarboxylic acid cycle. Membrane-anchoring subunit of succinate dehydrogenase (SDH) that is involved in complex II of the mitochondrial electron transport chain and is responsible for transferring electrons from succinate to ubiquinone (coenzyme Q). SDH also oxidizes malate to the non-canonical enol form of oxaloacetate, enol-oxaloacetate. Enol-oxaloacetate, which is a potent inhibitor of the succinate dehydrogenase activity, is further isomerized into keto-oxaloacetate. The sequence is that of Succinate dehydrogenase [ubiquinone] cytochrome b small subunit B, mitochondrial (sdhdb) from Danio rerio (Zebrafish).